The primary structure comprises 1085 residues: Protein CROWDED NUCLEI 3 (1085 aa).

Coiled coils occupy residues 51-149 and 185-695; these read DEAS…NDLK and RERA…LDVL. Lysine 318 participates in a covalent cross-link: Glycyl lysine isopeptide (Lys-Gly) (interchain with G-Cter in ubiquitin). Positions 404–411 match the Nuclear localization signal motif; sequence AKREAALE. A Glycyl lysine isopeptide (Lys-Gly) (interchain with G-Cter in ubiquitin) cross-link involves residue lysine 661. A phosphoserine mark is found at serine 764, serine 787, serine 825, and serine 843. Disordered regions lie at residues 801 to 997 and 1020 to 1077; these read TVKL…GKAE and NNTG…SIGK. The span at 813 to 825 shows a compositional bias: basic and acidic residues; that stretch reads SLDRVSGEDHEPS. Basic residues predominate over residues 854 to 868; sequence RRGRGRGRGRGKSVR. The segment covering 877–897 has biased composition (basic and acidic residues); it reads VSRDSKPSDGETPRKRQREQT. The residue at position 910 (serine 910) is a Phosphoserine. Over residues 932–941 the composition is skewed to polar residues; the sequence is VSQTPGQTRY. The span at 949–995 shows a compositional bias: basic and acidic residues; it reads VGTEEDKAQASKGATEKQERVNDDIRKVPSPKETRTPPEGENRENGK. Positions 1045 to 1066 are enriched in acidic residues; the sequence is EEDDENISMIEEENEGEEEEET.

Belongs to the CRWN family. Core component of the LINC complex which is composed of inner nuclear membrane SUN domain-containing proteins coupled to outer nuclear membrane WIP proteins, the nucleoskeletal CRWN/LINC proteins, and, possibly, KAKU4. As to expression, expressed at low levels in roots, leaves, flowers and flower stalks.

It localises to the nucleus membrane. It is found in the nucleus. Its subcellular location is the nucleoplasm. The protein localises to the cytoplasm. The protein resides in the nucleus lamina. In terms of biological role, component of SUN-protein-containing multivariate complexes also called LINC complexes which link the nucleoskeleton and cytoskeleton by providing versatile outer nuclear membrane attachment sites for cytoskeletal filaments. Required for nucleus structure organization (e.g. size and shape). The polypeptide is Protein CROWDED NUCLEI 3 (Arabidopsis thaliana (Mouse-ear cress)).